A 166-amino-acid chain; its full sequence is Ribosome maturation factor RimP (166 aa).

It belongs to the RimP family.

The protein localises to the cytoplasm. Required for maturation of 30S ribosomal subunits. This is Ribosome maturation factor RimP from Rickettsia akari (strain Hartford).